Reading from the N-terminus, the 300-residue chain is 4-hydroxy-tetrahydrodipicolinate synthase (300 aa).

Residue Thr-46 coordinates pyruvate. Catalysis depends on Tyr-134, which acts as the Proton donor/acceptor. Residue Lys-162 is the Schiff-base intermediate with substrate of the active site. Ile-207 serves as a coordination point for pyruvate.

It belongs to the DapA family. As to quaternary structure, homotetramer; dimer of dimers.

It localises to the cytoplasm. It carries out the reaction L-aspartate 4-semialdehyde + pyruvate = (2S,4S)-4-hydroxy-2,3,4,5-tetrahydrodipicolinate + H2O + H(+). It functions in the pathway amino-acid biosynthesis; L-lysine biosynthesis via DAP pathway; (S)-tetrahydrodipicolinate from L-aspartate: step 3/4. Its function is as follows. Catalyzes the condensation of (S)-aspartate-beta-semialdehyde [(S)-ASA] and pyruvate to 4-hydroxy-tetrahydrodipicolinate (HTPA). The polypeptide is 4-hydroxy-tetrahydrodipicolinate synthase (Protochlamydia amoebophila (strain UWE25)).